The following is a 275-amino-acid chain: Hemin import ATP-binding protein HmuV (275 aa).

In terms of domain architecture, ABC transporter spans 2–242 (LKAAGIGVRL…EWIETGFGLQ (241 aa)). ATP is bound at residue 34–41 (GPNGAGKS).

The protein belongs to the ABC transporter superfamily. Heme (hemin) importer (TC 3.A.1.14.5) family. The complex is composed of two ATP-binding proteins (HmuV), two transmembrane proteins (HmuU) and a solute-binding protein (HmuT).

It is found in the cell inner membrane. Functionally, part of the ABC transporter complex HmuTUV involved in hemin import. Responsible for energy coupling to the transport system. The protein is Hemin import ATP-binding protein HmuV of Gloeobacter violaceus (strain ATCC 29082 / PCC 7421).